The following is a 320-amino-acid chain: Putative S-adenosyl-L-methionine-dependent methyltransferase MAP_4078 (320 aa).

S-adenosyl-L-methionine-binding positions include Asp-132 and 161-162; that span reads DL. The disordered stretch occupies residues 294–320; the sequence is PPHDIEDAIPQTRFVAAQRTERTRPDR.

Belongs to the UPF0677 family.

In terms of biological role, exhibits S-adenosyl-L-methionine-dependent methyltransferase activity. In Mycolicibacterium paratuberculosis (strain ATCC BAA-968 / K-10) (Mycobacterium paratuberculosis), this protein is Putative S-adenosyl-L-methionine-dependent methyltransferase MAP_4078.